The chain runs to 236 residues: Purine nucleoside phosphorylase DeoD-type (236 aa).

His-5 lines the a purine D-ribonucleoside pocket. Phosphate contacts are provided by residues Gly-21, Arg-25, Arg-44, and 88-91; that span reads RVGS. A purine D-ribonucleoside is bound by residues 180–182 and 204–205; these read DME and SD. Asp-205 (proton donor) is an active-site residue.

This sequence belongs to the PNP/UDP phosphorylase family. As to quaternary structure, homohexamer; trimer of homodimers.

It carries out the reaction a purine D-ribonucleoside + phosphate = a purine nucleobase + alpha-D-ribose 1-phosphate. The catalysed reaction is a purine 2'-deoxy-D-ribonucleoside + phosphate = a purine nucleobase + 2-deoxy-alpha-D-ribose 1-phosphate. In terms of biological role, catalyzes the reversible phosphorolytic breakdown of the N-glycosidic bond in the beta-(deoxy)ribonucleoside molecules, with the formation of the corresponding free purine bases and pentose-1-phosphate. The protein is Purine nucleoside phosphorylase DeoD-type of Aliivibrio salmonicida (strain LFI1238) (Vibrio salmonicida (strain LFI1238)).